Here is a 156-residue protein sequence, read N- to C-terminus: ATP synthase subunit b (156 aa).

Residues 11–31 (LIAFALFVWFCMKFVWPPIIN) form a helical membrane-spanning segment.

The protein belongs to the ATPase B chain family. As to quaternary structure, F-type ATPases have 2 components, F(1) - the catalytic core - and F(0) - the membrane proton channel. F(1) has five subunits: alpha(3), beta(3), gamma(1), delta(1), epsilon(1). F(0) has three main subunits: a(1), b(2) and c(10-14). The alpha and beta chains form an alternating ring which encloses part of the gamma chain. F(1) is attached to F(0) by a central stalk formed by the gamma and epsilon chains, while a peripheral stalk is formed by the delta and b chains.

The protein localises to the cell inner membrane. In terms of biological role, f(1)F(0) ATP synthase produces ATP from ADP in the presence of a proton or sodium gradient. F-type ATPases consist of two structural domains, F(1) containing the extramembraneous catalytic core and F(0) containing the membrane proton channel, linked together by a central stalk and a peripheral stalk. During catalysis, ATP synthesis in the catalytic domain of F(1) is coupled via a rotary mechanism of the central stalk subunits to proton translocation. Component of the F(0) channel, it forms part of the peripheral stalk, linking F(1) to F(0). The protein is ATP synthase subunit b of Haemophilus influenzae (strain PittEE).